Here is a 189-residue protein sequence, read N- to C-terminus: MTASERVVVKELSSSLLDMKFMLKKKKQIETKAAKKKEAKLDQLITEKEAEATCSTEILKSSEPKLEICYDYAKLENLKFGRLSFGGFNKEVELLMEYYEKLQNGMLSDSDDDGMDVDDEEMAKSLGGQKLAALDKKSQSKRERRQQNERNEETTGGRRFNIKDIRKRFAADDVADAPERKFMKPAEDC.

Residues 124–161 (KSLGGQKLAALDKKSQSKRERRQQNERNEETTGGRRFN) are disordered. The span at 133–161 (ALDKKSQSKRERRQQNERNEETTGGRRFN) shows a compositional bias: basic and acidic residues.

Belongs to the MPP6 family.

The protein is Protein F29A7.6 of Caenorhabditis elegans.